The primary structure comprises 316 residues: Glutathione synthetase (316 aa).

One can recognise an ATP-grasp domain in the interval 125–310 (KLFTAWFSDL…ITGMLMDAIE (186 aa)). Residue Arg256 is glycosylated (N-beta-linked (GlcNAc) arginine). Glu281 and Asn283 together coordinate Mg(2+).

This sequence belongs to the prokaryotic GSH synthase family. Mg(2+) serves as cofactor. Mn(2+) is required as a cofactor.

The catalysed reaction is gamma-L-glutamyl-L-cysteine + glycine + ATP = glutathione + ADP + phosphate + H(+). It functions in the pathway sulfur metabolism; glutathione biosynthesis; glutathione from L-cysteine and L-glutamate: step 2/2. The chain is Glutathione synthetase from Escherichia coli O127:H6 (strain E2348/69 / EPEC).